The chain runs to 519 residues: MASTFNPRECKLSKQEGQNYGFFLRIEKDTDGHLIRVIEEGSPAEKAGLLDGDRVLRINGVFVDKEEHAQVVELVRKSGNSVTLLVLDGDSYEKAVKNQVDLKELDQSQREAALNDKKPGPGMNGAVEPCAQPRLCYLVKEGNSFGFSLKTIQGKKGVYLTDIMPQGVAMKAGVLADDHLIEVNGENVENASHEEVVEKVTKSGSRIMFLLVDKETARCHSEQKTQFKRETASLKLLPHQPRVVVIKKGSNGYGFYLRAGPEQKGQIIKDIEPGSPAEAAGLKNNDLVVAVNGKSVEALDHDGVVEMIRKGGDQTTLLVLDKEAESIYSLARFSPLLYCQSQELPNGSVKEGPAPIPAPLEATGSEPTEDAEGHKPKLCRLLKEDDSYGFHLNAIRGQPGSFVKEVQQGGPADKAGLENEDVIIEVNGENVQEEPYDRVVERIKSSGKHVTLLVCGKMAYSYFQAKKIPIVSSMAEPLVAGPDEKGETSAESEHDAHPAKDRTLSTASHSSSNSEDTEM.

The PDZ 1 domain maps to 9–90 (ECKLSKQEGQ…SVTLLVLDGD (82 aa)). S108, S148, S192, S250, S334, and S348 each carry phosphoserine. 2 consecutive PDZ domains span residues 128-215 (EPCA…VDKE) and 243-323 (VVVI…LDKE). Positions 348–374 (SVKEGPAPIPAPLEATGSEPTEDAEGH) are disordered. Positions 378–458 (LCRLLKEDDS…HVTLLVCGKM (81 aa)) constitute a PDZ 4 domain. A phosphothreonine mark is found at T451 and T488. The segment at 479–519 (VAGPDEKGETSAESEHDAHPAKDRTLSTASHSSSNSEDTEM) is disordered. A compositionally biased stretch (basic and acidic residues) spans 482-503 (PDEKGETSAESEHDAHPAKDRT). Residues S489 and S492 each carry the phosphoserine modification. T503 bears the Phosphothreonine mark. The segment covering 505 to 519 (STASHSSSNSEDTEM) has biased composition (low complexity). Phosphoserine occurs at positions 508, 510, 511, 512, and 514.

Belongs to the NHER family. In terms of assembly, interacts with PDZK1IP1 and ABCC2. Binds to the C-terminal region of SLC26A3. Interacts (via C-terminal PDZ domain) with SLC26A6 (via C-terminal domain). Interacts (via C-terminal PDZ domain) with SLC9A3 (via C-terminal domain). Component of a complex, composed of PDZK1, SYNGAP1, KLHL17 and NMDA receptors. Interacts (via PDZ1 domain) directly with KLHL17; the interaction is important for integrity of actin cytoskeleton structures in neurons. Forms a heterodimeric complex with NHERF1. Interacts with AKAP2, BCR, CFTR, SLCO1A1, SLC22A12, SLC22A4, SLC22A5, SLC26A6, NHERF2 and SLC17A1. Interacts (via the first PDZ domain) with PTGIR (via non-isoprenylated C-terminus). Interacts (via PDZ domains 1 and 3) with SCARB1 (C-terminal domain). Interacts (via PDZ domains 1 and 3) with SLC5A8 (via PDZ-binding motif); interaction increases nicotinate transport activity of SLC5A8. As to expression, expressed in kidney, liver, small intestine. brain, lung, and testis (at protein level).

The protein resides in the membrane. Its subcellular location is the cell membrane. In terms of biological role, a scaffold protein that connects plasma membrane proteins and regulatory components, regulating their surface expression in epithelial cells apical domains. May be involved in the coordination of a diverse range of regulatory processes for ion transport and second messenger cascades. In complex with NHERF1, may cluster proteins that are functionally dependent in a mutual fashion and modulate the trafficking and the activity of the associated membrane proteins. May play a role in the cellular mechanisms associated with multidrug resistance through its interaction with ABCC2 and PDZK1IP1. May potentiate the CFTR chloride channel activity. Required for normal cell-surface expression of SCARB1. Plays a role in maintaining normal plasma cholesterol levels via its effects on SCARB1. Plays a role in the normal localization and function of the chloride-anion exchanger SLC26A6 to the plasma membrane in the brush border of the proximal tubule of the kidney. May be involved in the regulation of proximal tubular Na(+)-dependent inorganic phosphate cotransport therefore playing an important role in tubule function. The polypeptide is Na(+)/H(+) exchange regulatory cofactor NHE-RF3 (Pdzk1) (Mus musculus (Mouse)).